A 330-amino-acid chain; its full sequence is Glycerol-3-phosphate dehydrogenase [NAD(P)+] (330 aa).

Residues Ser-10, Trp-11, Arg-31, and Lys-105 each contribute to the NADPH site. The sn-glycerol 3-phosphate site is built by Lys-105, Gly-135, and Ser-137. Residue Ala-139 participates in NADPH binding. Residues Lys-190, Asp-243, Ser-253, Arg-254, and Asn-255 each contribute to the sn-glycerol 3-phosphate site. Lys-190 (proton acceptor) is an active-site residue. Arg-254 lines the NADPH pocket. Residues Val-278 and Glu-280 each coordinate NADPH.

This sequence belongs to the NAD-dependent glycerol-3-phosphate dehydrogenase family.

It localises to the cytoplasm. The enzyme catalyses sn-glycerol 3-phosphate + NAD(+) = dihydroxyacetone phosphate + NADH + H(+). It carries out the reaction sn-glycerol 3-phosphate + NADP(+) = dihydroxyacetone phosphate + NADPH + H(+). Its pathway is membrane lipid metabolism; glycerophospholipid metabolism. Catalyzes the reduction of the glycolytic intermediate dihydroxyacetone phosphate (DHAP) to sn-glycerol 3-phosphate (G3P), the key precursor for phospholipid synthesis. The polypeptide is Glycerol-3-phosphate dehydrogenase [NAD(P)+] (Nitratidesulfovibrio vulgaris (strain ATCC 29579 / DSM 644 / CCUG 34227 / NCIMB 8303 / VKM B-1760 / Hildenborough) (Desulfovibrio vulgaris)).